Consider the following 229-residue polypeptide: Aminopyrimidine aminohydrolase (229 aa).

Asp44 provides a ligand contact to substrate. Cys137 functions as the Nucleophile in the catalytic mechanism. 2 residues coordinate substrate: Tyr141 and Tyr167. Glu208 (proton donor) is an active-site residue.

Belongs to the TenA family. Homotetramer.

The catalysed reaction is 4-amino-5-aminomethyl-2-methylpyrimidine + H2O = 4-amino-5-hydroxymethyl-2-methylpyrimidine + NH4(+). The enzyme catalyses thiamine + H2O = 5-(2-hydroxyethyl)-4-methylthiazole + 4-amino-5-hydroxymethyl-2-methylpyrimidine + H(+). The protein operates within cofactor biosynthesis; thiamine diphosphate biosynthesis. Functionally, catalyzes an amino-pyrimidine hydrolysis reaction at the C5' of the pyrimidine moiety of thiamine compounds, a reaction that is part of a thiamine salvage pathway. Thus, catalyzes the conversion of 4-amino-5-aminomethyl-2-methylpyrimidine to 4-amino-5-hydroxymethyl-2-methylpyrimidine (HMP). Is also able to catalyze the hydrolytic cleavage of thiamine; however, this thiaminase activity may not be physiologically relevant. Therefore, is probably involved in the regeneration of the thiamine pyrimidine from thiamine degraded products present in the environment, rather than in thiamine degradation. The protein is Aminopyrimidine aminohydrolase of Staphylococcus aureus (strain MRSA252).